The chain runs to 168 residues: MSRLVLLISLVIVVASAAAPQCEVCKKVLDDVMAKVPAGDKSKPDAIGKVIREHCETTRNKENKFCFYIGALPESATSIMNEVTKPLSWSMPTEKVCLEKLKGKDAQICELKYDKPLDWKTIDLKKMRVKELKNILGEWGEVCKGCTEKAELIKRIEELKPKYVKEEL.

A signal peptide spans 1-17; it reads MSRLVLLISLVIVVASA. 4 cysteine pairs are disulfide-bonded: Cys-22–Cys-109, Cys-25–Cys-97, Cys-55–Cys-66, and Cys-143–Cys-146.

This sequence belongs to the ARMET family. Expressed in the intestine, spermatheca and nervous system. Expressed in the hypoderm. Expressed in structures of the excretory system. Not expressed in the male gonad.

The protein resides in the secreted. It is found in the endoplasmic reticulum lumen. Its function is as follows. Inhibits endoplasmic reticulum (ER) stress response. Retained in the ER under normal conditions and is up-regulated and secreted by the ER in response to ER stress and hypoxia. Following secretion by the ER, directly binds to 3-O-sulfogalactosylceramide, a lipid sulfatide in the outer cell membrane of target cells. Sulfatide binding promotes its cellular uptake by endocytosis, and is required for its role in alleviating ER stress under ER stress conditions. Has a neuroprotective role, ensuring survival of dopaminergic neurons during normal growth. This is Mesencephalic astrocyte-derived neurotrophic factor homolog from Caenorhabditis elegans.